Consider the following 945-residue polypeptide: Isoleucine--tRNA ligase 1 (945 aa).

A 'HIGH' region motif is present at residues 66-76 (PYANGDIHLGH). Glutamate 581 contributes to the L-isoleucyl-5'-AMP binding site. Residues 622–626 (KMSKS) carry the 'KMSKS' region motif. Lysine 625 serves as a coordination point for ATP. Cysteine 908, cysteine 911, cysteine 928, and cysteine 931 together coordinate Zn(2+).

The protein belongs to the class-I aminoacyl-tRNA synthetase family. IleS type 1 subfamily. As to quaternary structure, monomer. It depends on Zn(2+) as a cofactor.

Its subcellular location is the cytoplasm. The enzyme catalyses tRNA(Ile) + L-isoleucine + ATP = L-isoleucyl-tRNA(Ile) + AMP + diphosphate. Functionally, catalyzes the attachment of isoleucine to tRNA(Ile). As IleRS can inadvertently accommodate and process structurally similar amino acids such as valine, to avoid such errors it has two additional distinct tRNA(Ile)-dependent editing activities. One activity is designated as 'pretransfer' editing and involves the hydrolysis of activated Val-AMP. The other activity is designated 'posttransfer' editing and involves deacylation of mischarged Val-tRNA(Ile). This chain is Isoleucine--tRNA ligase 1, found in Burkholderia mallei (strain ATCC 23344).